A 66-amino-acid chain; its full sequence is Surface composition regulator (66 aa).

The protein belongs to the GlgS family.

In terms of biological role, major determinant of cell surface composition. Negatively regulates motility, adhesion and synthesis of biofilm exopolysaccharides. The sequence is that of Surface composition regulator from Shigella dysenteriae serotype 1 (strain Sd197).